The primary structure comprises 127 residues: Fatty acid-binding protein, liver (127 aa).

The residue at position 1 (Met1) is an N-acetylmethionine. Position 11 is a phosphoserine (Ser11). An N6-succinyllysine mark is found at Lys31 and Lys36. Residue Ser39 is modified to Phosphoserine. Lys46 is modified (N6-succinyllysine). Thr51 is subject to Phosphothreonine. Ser56 is modified (phosphoserine). An N6-succinyllysine mark is found at Lys57, Lys78, and Lys90. At Ser100 the chain carries Phosphoserine. Lys121 carries the N6-succinyllysine modification.

This sequence belongs to the calycin superfamily. Fatty-acid binding protein (FABP) family. Monomer.

The protein localises to the cytoplasm. Its function is as follows. Plays a role in lipoprotein-mediated cholesterol uptake in hepatocytes. Binds cholesterol. Binds free fatty acids and their coenzyme A derivatives, bilirubin, and some other small molecules in the cytoplasm. May be involved in intracellular lipid transport. In Sus scrofa (Pig), this protein is Fatty acid-binding protein, liver (FABP1).